Here is a 236-residue protein sequence, read N- to C-terminus: Pyridoxal phosphate homeostasis protein (236 aa).

Lysine 36 is modified (N6-(pyridoxal phosphate)lysine).

Belongs to the pyridoxal phosphate-binding protein YggS/PROSC family.

Pyridoxal 5'-phosphate (PLP)-binding protein, which is involved in PLP homeostasis. This Vibrio cholerae serotype O1 (strain ATCC 39315 / El Tor Inaba N16961) protein is Pyridoxal phosphate homeostasis protein.